A 158-amino-acid polypeptide reads, in one-letter code: MIFVEKSFTHIEADRARMVDISEKNNVLRMARAAGEIVLSAETMEKIRTGTVEKGNVFATARVAAVLAVKKTPETIPMCHQIPITGIDVDLEIGKDSVSAVVEVRTVGKTGVEMEALTGVSVALLTVWDMVKSAEKDETGNYPHTLIRNIRVLEKLKG.

Substrate is bound by residues 78–80 (MCH) and 114–115 (ME). Asp129 is a catalytic residue.

The protein belongs to the MoaC family. As to quaternary structure, homohexamer; trimer of dimers.

The enzyme catalyses (8S)-3',8-cyclo-7,8-dihydroguanosine 5'-triphosphate = cyclic pyranopterin phosphate + diphosphate. The protein operates within cofactor biosynthesis; molybdopterin biosynthesis. Functionally, catalyzes the conversion of (8S)-3',8-cyclo-7,8-dihydroguanosine 5'-triphosphate to cyclic pyranopterin monophosphate (cPMP). The protein is Probable cyclic pyranopterin monophosphate synthase of Methanosarcina acetivorans (strain ATCC 35395 / DSM 2834 / JCM 12185 / C2A).